Consider the following 142-residue polypeptide: Large ribosomal subunit protein uL11 (142 aa).

Belongs to the universal ribosomal protein uL11 family. Part of the ribosomal stalk of the 50S ribosomal subunit. Interacts with L10 and the large rRNA to form the base of the stalk. L10 forms an elongated spine to which L12 dimers bind in a sequential fashion forming a multimeric L10(L12)X complex. In terms of processing, one or more lysine residues are methylated.

Its function is as follows. Forms part of the ribosomal stalk which helps the ribosome interact with GTP-bound translation factors. This is Large ribosomal subunit protein uL11 from Pasteurella multocida (strain Pm70).